Consider the following 92-residue polypeptide: Large ribosomal subunit protein eL43 (92 aa).

The Zn(2+) site is built by Cys-39, Cys-42, Cys-57, and Cys-60. The C4-type zinc-finger motif lies at 39–60; the sequence is CSFCGKTKMKRKAVGIWHCGSC.

The protein belongs to the eukaryotic ribosomal protein eL43 family. As to quaternary structure, component of the large ribosomal subunit.

It is found in the cytoplasm. Component of the large ribosomal subunit. The ribosome is a large ribonucleoprotein complex responsible for the synthesis of proteins in the cell. This Gallus gallus (Chicken) protein is Large ribosomal subunit protein eL43 (RPL37A).